A 382-amino-acid polypeptide reads, in one-letter code: Beta-lactamase CMY-10 (382 aa).

Residues 1–23 (MQQRQSILWGAVATLMWAGLAHA) form the signal peptide. Residue serine 88 is the Acyl-ester intermediate of the active site. AMP is bound at residue serine 88. 6 residues coordinate GMP: serine 88, glutamine 144, tyrosine 174, threonine 336, serine 338, and asparagine 363. Residues serine 88, glutamine 144, tyrosine 174, threonine 336, serine 338, and asparagine 363 each coordinate IMP. Tyrosine 174 contacts AMP. Serine 338 lines the AMP pocket.

This sequence belongs to the class-C beta-lactamase family. Monomer.

It catalyses the reaction a beta-lactam + H2O = a substituted beta-amino acid. Its activity is regulated as follows. Inhibited by various nucleotides in vitro, including adenosine 5'-(P-acetyl)monophosphate (acAMP), inosine-5'-monophosphate (IMP) and guanosine-5'-monophosphate (GMP); IMP and GMP exhibit strongest competitive inhibition. Inhibited by the beta-lactamase-blocking agent, avibactam. Inhibited by clavulanic acid. Weakly inhibited by citric acid. Class C beta-lactamase which confers resistance to penicillins and cephalosporins. Has benzylpenicillin-, ceftazidime-, nitrocefin- and imipenem-hydrolyzing activity. The polypeptide is Beta-lactamase CMY-10 (Klebsiella aerogenes (Enterobacter aerogenes)).